The chain runs to 167 residues: SsrA-binding protein (167 aa).

Residues 144–167 form a disordered region; it reads HDKRAADKEKQSKKEVRSAMAKYQ. The segment covering 146-160 has biased composition (basic and acidic residues); the sequence is KRAADKEKQSKKEVR.

It belongs to the SmpB family.

It is found in the cytoplasm. Functionally, required for rescue of stalled ribosomes mediated by trans-translation. Binds to transfer-messenger RNA (tmRNA), required for stable association of tmRNA with ribosomes. tmRNA and SmpB together mimic tRNA shape, replacing the anticodon stem-loop with SmpB. tmRNA is encoded by the ssrA gene; the 2 termini fold to resemble tRNA(Ala) and it encodes a 'tag peptide', a short internal open reading frame. During trans-translation Ala-aminoacylated tmRNA acts like a tRNA, entering the A-site of stalled ribosomes, displacing the stalled mRNA. The ribosome then switches to translate the ORF on the tmRNA; the nascent peptide is terminated with the 'tag peptide' encoded by the tmRNA and targeted for degradation. The ribosome is freed to recommence translation, which seems to be the essential function of trans-translation. This Synechococcus sp. (strain CC9902) protein is SsrA-binding protein.